Consider the following 387-residue polypeptide: MELNTLKSTFINNFGKEPNSLFFSPGRINLIGEHIDYNGGFVFPCPITLGTFAAASLRDDRICRAYSLNFESLGVIEFSLDDLSYKKEDNWTNYLKGVLKVLIEKGYKIDKGIDLVINGNLPNGAGLSSSASLEMLIVKILDTFFSLNISKVDAALIGKEVENTYIGVNSGIMDQFAISLGEKDKAILLDCNSLYYEYVPLNLGDNSIIIMNTNKRRELADSKYNERRKECDDSLDTLKKYTNISSLCELTSLEFETYKDKIEDSNKLRRCVHAISENERVKDAVKALKENNLELFGQLMNQSHISLRDDYEVTGKELDTLAENAWKQPGVLGARMTGAGFGGCAIAIVNNAHVDEFIKNVGQAYKDAIGYEASFYVASIGNGPTEL.

Residue 33-36 coordinates substrate; the sequence is EHID. ATP is bound by residues S67 and 124 to 130; that span reads GAGLSSS. Mg(2+)-binding residues include S130 and E162. D174 (proton acceptor) is an active-site residue. Y224 contacts substrate.

This sequence belongs to the GHMP kinase family. GalK subfamily.

The protein resides in the cytoplasm. It carries out the reaction alpha-D-galactose + ATP = alpha-D-galactose 1-phosphate + ADP + H(+). It functions in the pathway carbohydrate metabolism; galactose metabolism. In terms of biological role, catalyzes the transfer of the gamma-phosphate of ATP to D-galactose to form alpha-D-galactose-1-phosphate (Gal-1-P). The sequence is that of Galactokinase from Clostridium perfringens (strain 13 / Type A).